The primary structure comprises 119 residues: Ribonuclease P protein component (119 aa).

This sequence belongs to the RnpA family. Consists of a catalytic RNA component (M1 or rnpB) and a protein subunit.

It carries out the reaction Endonucleolytic cleavage of RNA, removing 5'-extranucleotides from tRNA precursor.. In terms of biological role, RNaseP catalyzes the removal of the 5'-leader sequence from pre-tRNA to produce the mature 5'-terminus. It can also cleave other RNA substrates such as 4.5S RNA. The protein component plays an auxiliary but essential role in vivo by binding to the 5'-leader sequence and broadening the substrate specificity of the ribozyme. This Aeromonas hydrophila subsp. hydrophila (strain ATCC 7966 / DSM 30187 / BCRC 13018 / CCUG 14551 / JCM 1027 / KCTC 2358 / NCIMB 9240 / NCTC 8049) protein is Ribonuclease P protein component.